Consider the following 239-residue polypeptide: ATP-dependent dethiobiotin synthetase BioD (239 aa).

Residue 15–20 (EIGKTF) participates in ATP binding. Thr19 serves as a coordination point for Mg(2+). The active site involves Lys40. Residues Asp57, 118 to 121 (EGVG), and 178 to 179 (NH) contribute to the ATP site. 2 residues coordinate Mg(2+): Asp57 and Glu118.

This sequence belongs to the dethiobiotin synthetase family. Homodimer. Mg(2+) is required as a cofactor.

The protein localises to the cytoplasm. The catalysed reaction is (7R,8S)-7,8-diammoniononanoate + CO2 + ATP = (4R,5S)-dethiobiotin + ADP + phosphate + 3 H(+). The protein operates within cofactor biosynthesis; biotin biosynthesis; biotin from 7,8-diaminononanoate: step 1/2. In terms of biological role, catalyzes a mechanistically unusual reaction, the ATP-dependent insertion of CO2 between the N7 and N8 nitrogen atoms of 7,8-diaminopelargonic acid (DAPA, also called 7,8-diammoniononanoate) to form a ureido ring. This is ATP-dependent dethiobiotin synthetase BioD from Burkholderia cenocepacia (strain ATCC BAA-245 / DSM 16553 / LMG 16656 / NCTC 13227 / J2315 / CF5610) (Burkholderia cepacia (strain J2315)).